Reading from the N-terminus, the 44-residue chain is Keratin-associated protein 20-3 (44 aa).

It belongs to the KRTAP type 20 family. Interacts with hair keratins.

In the hair cortex, hair keratin intermediate filaments are embedded in an interfilamentous matrix, consisting of hair keratin-associated proteins (KRTAP), which are essential for the formation of a rigid and resistant hair shaft through their extensive disulfide bond cross-linking with abundant cysteine residues of hair keratins. The matrix proteins include the high-sulfur and high-glycine-tyrosine keratins. The chain is Keratin-associated protein 20-3 (KRTAP20-3) from Homo sapiens (Human).